The chain runs to 90 residues: Protein LURE 1.4 (90 aa).

A signal peptide spans 1-19 (MKCPSIFLTLLIFVSSCTS). Residue asparagine 23 is glycosylated (N-linked (GlcNAc...) asparagine). 3 cysteine pairs are disulfide-bonded: cysteine 58–cysteine 75, cysteine 61–cysteine 82, and cysteine 65–cysteine 84. The PRK6 binding stretch occupies residues 67 to 87 (RRGKYIRTCSFERKLCRCSIS).

The protein belongs to the DEFL family. As to quaternary structure, binds to PRK6 LRRs. In terms of tissue distribution, expressed in the pistil. Detected exclusively in the synergid cells.

The protein localises to the secreted. Functionally, pollen tube attractants guiding pollen tubes to the ovular micropyle. This Arabidopsis thaliana (Mouse-ear cress) protein is Protein LURE 1.4.